The primary structure comprises 385 residues: S-adenosylmethionine synthase (385 aa).

His15 provides a ligand contact to ATP. Asp17 contributes to the Mg(2+) binding site. Glu43 contacts K(+). L-methionine is bound by residues Glu56 and Gln99. Residues 99–109 form a flexible loop region; it reads QSPDINQGVDR. Residues 164-166, 230-231, Asp239, 245-246, Ala262, and Lys266 each bind ATP; these read DAK, RF, and RK. Asp239 serves as a coordination point for L-methionine. Lys270 is a binding site for L-methionine.

It belongs to the AdoMet synthase family. Homotetramer; dimer of dimers. It depends on Mg(2+) as a cofactor. Requires K(+) as cofactor.

The protein resides in the cytoplasm. It catalyses the reaction L-methionine + ATP + H2O = S-adenosyl-L-methionine + phosphate + diphosphate. The protein operates within amino-acid biosynthesis; S-adenosyl-L-methionine biosynthesis; S-adenosyl-L-methionine from L-methionine: step 1/1. Functionally, catalyzes the formation of S-adenosylmethionine (AdoMet) from methionine and ATP. The overall synthetic reaction is composed of two sequential steps, AdoMet formation and the subsequent tripolyphosphate hydrolysis which occurs prior to release of AdoMet from the enzyme. This chain is S-adenosylmethionine synthase, found in Sodalis glossinidius (strain morsitans).